The following is a 119-amino-acid chain: UPF0102 protein Nmul_A0195 (119 aa).

The protein belongs to the UPF0102 family.

The sequence is that of UPF0102 protein Nmul_A0195 from Nitrosospira multiformis (strain ATCC 25196 / NCIMB 11849 / C 71).